A 132-amino-acid polypeptide reads, in one-letter code: ATP synthase epsilon chain, cyanelle (132 aa).

Belongs to the ATPase epsilon chain family. As to quaternary structure, F-type ATPases have 2 components, CF(1) - the catalytic core - and CF(0) - the membrane proton channel. CF(1) has five subunits: alpha(3), beta(3), gamma(1), delta(1), epsilon(1). CF(0) has three main subunits: a, b and c.

The protein localises to the plastid. It is found in the cyanelle thylakoid membrane. Its function is as follows. Produces ATP from ADP in the presence of a proton gradient across the membrane. This chain is ATP synthase epsilon chain, cyanelle, found in Cyanophora paradoxa.